We begin with the raw amino-acid sequence, 153 residues long: 6,7-dimethyl-8-ribityllumazine synthase (153 aa).

5-amino-6-(D-ribitylamino)uracil is bound by residues phenylalanine 22, 56 to 58 (AFE), and 80 to 82 (TVI). 85-86 (AT) is a (2S)-2-hydroxy-3-oxobutyl phosphate binding site. The Proton donor role is filled by histidine 88. 5-amino-6-(D-ribitylamino)uracil is bound at residue phenylalanine 113. Residue arginine 127 participates in (2S)-2-hydroxy-3-oxobutyl phosphate binding.

The protein belongs to the DMRL synthase family.

It catalyses the reaction (2S)-2-hydroxy-3-oxobutyl phosphate + 5-amino-6-(D-ribitylamino)uracil = 6,7-dimethyl-8-(1-D-ribityl)lumazine + phosphate + 2 H2O + H(+). Its pathway is cofactor biosynthesis; riboflavin biosynthesis; riboflavin from 2-hydroxy-3-oxobutyl phosphate and 5-amino-6-(D-ribitylamino)uracil: step 1/2. Catalyzes the formation of 6,7-dimethyl-8-ribityllumazine by condensation of 5-amino-6-(D-ribitylamino)uracil with 3,4-dihydroxy-2-butanone 4-phosphate. This is the penultimate step in the biosynthesis of riboflavin. This Clostridium perfringens (strain ATCC 13124 / DSM 756 / JCM 1290 / NCIMB 6125 / NCTC 8237 / Type A) protein is 6,7-dimethyl-8-ribityllumazine synthase.